Reading from the N-terminus, the 494-residue chain is Alanine--glyoxylate aminotransferase 2-like (494 aa).

Residue Lys-291 is modified to N6-(pyridoxal phosphate)lysine.

Belongs to the class-III pyridoxal-phosphate-dependent aminotransferase family. Requires pyridoxal 5'-phosphate as cofactor.

This Drosophila melanogaster (Fruit fly) protein is Alanine--glyoxylate aminotransferase 2-like.